Reading from the N-terminus, the 5101-residue chain is Malformin synthetase mlfA (5101 aa).

An adenylation 1 region spans residues 225–616 (ERHAANRPHS…CGRADTQVKL (392 aa)). The region spanning 757–830 (SRLEQKIQLA…EAASLAEVQE (74 aa)) is the Carrier 1 domain. Residue serine 791 is modified to O-(pantetheine 4'-phosphoryl)serine. Positions 868-1299 (EDVFPCTTMQ…ALNTLSLLQA (432 aa)) are condensation 1. The interval 1327-1716 (DRWVTRQPEG…GRKDTQVKLR (390 aa)) is adenylation 2. One can recognise a Carrier 2 domain in the interval 1854–1931 (TPTLELERTL…QLAAEVGEPA (78 aa)). An O-(pantetheine 4'-phosphoryl)serine modification is found at serine 1891. Disordered regions lie at residues 1932 to 1961 (GQSASSASSTTEEGFTFSTPDDSSTNDGVD) and 1994 to 2020 (GGSSSNKTPSVSSSSSSSSSSKRKKNA). Composition is skewed to low complexity over residues 1934–1958 (SASSASSTTEEGFTFSTPDDSSTND) and 1996–2013 (SSSNKTPSVSSSSSSSSS). Residues 2066 to 2481 (EDIYPATALQ…AVSCSDKETL (416 aa)) are condensation 2. An adenylation 3 region spans residues 2504 to 2896 (RRTPHAPAVC…IGRRDGQLKL (393 aa)). The region spanning 3032–3108 (RPVTSQEHEM…QLICHLNTIR (77 aa)) is the Carrier 3 domain. O-(pantetheine 4'-phosphoryl)serine is present on serine 3069. Condensation stretches follow at residues 3125-3590 (WVAL…TYDQ) and 3611-4030 (NIYP…EHLV). The segment at 4055 to 4445 (HNSRQAVCAW…VGRKDNQIKF (391 aa)) is adenylation 4. Residues 4579 to 4655 (MPSTAAERKM…DLSDQAKSLI (77 aa)) form the Carrier 4 domain. Serine 4616 carries the O-(pantetheine 4'-phosphoryl)serine modification. Residues 4712–5097 (IVVDIPGPID…KIVGLLRHPE (386 aa)) form a condensation 5 region.

Belongs to the NRP synthetase family.

It functions in the pathway secondary metabolite biosynthesis. In terms of biological role, nonribosomal peptide synthetase; part of the gene cluster that mediates the biosynthesis of malformins, cyclic pentapeptides with a disulfide bond between 2 consecutive cysteins, that show potential anti-tumor as well as antimalarial and antitrypanosomal properties. The nonribosomal peptide synthetase mlfA is responsible of the formation of the cyclic pentapeptide. The malformin biosynthesis clusters in malformin-producing fungi also contain enzymes involved in the formation of the disulfide bond between the two consecutive cysteins within malformins, in addition to additional tailoring enzymes such as methyltransferases or oxidoreductases. They are also composed of up to 4 major facilitator superfamily transporters, and transcription factors probably involved in the regulation of the expression of those clusters. The sequence is that of Malformin synthetase mlfA from Aspergillus kawachii (strain NBRC 4308) (White koji mold).